The primary structure comprises 887 residues: ABC transporter A family member 10 (887 aa).

7 consecutive transmembrane segments (helical) span residues 38–58 (GIQY…VITL), 198–218 (YLYV…LLVT), 245–265 (IIIV…VVLY), 277–297 (VMLF…GIIL), 309–329 (AISS…QFYL), 335–355 (SSWL…EFLY), and 376–396 (ISFL…WYIT). The segment covering 443 to 469 (NNCNNNNTSPSSSSSSQSSPLNKPLLS) has biased composition (low complexity). Residues 443–474 (NNCNNNNTSPSSSSSSQSSPLNKPLLSGDSDD) form a disordered region. The ABC transporter domain maps to 481–728 (IRLVNLKKTY…FNLGYILTIV (248 aa)). Residue 519 to 526 (GQNGSGKT) coordinates ATP. A compositionally biased stretch (low complexity) spans 774 to 797 (NNNNNENNSNNSDGSSSSSDSSSS). A disordered region spans residues 774 to 799 (NNNNNENNSNNSDGSSSSSDSSSSKD).

The protein belongs to the ABC transporter superfamily. ABCA family.

It localises to the membrane. In Dictyostelium discoideum (Social amoeba), this protein is ABC transporter A family member 10 (abcA10).